The chain runs to 61 residues: Small ribosomal subunit protein uS14 (61 aa).

Zn(2+) is bound by residues cysteine 24, cysteine 27, cysteine 40, and cysteine 43.

Belongs to the universal ribosomal protein uS14 family. Zinc-binding uS14 subfamily. In terms of assembly, part of the 30S ribosomal subunit. Contacts proteins S3 and S10. The cofactor is Zn(2+).

In terms of biological role, binds 16S rRNA, required for the assembly of 30S particles and may also be responsible for determining the conformation of the 16S rRNA at the A site. This Geobacter metallireducens (strain ATCC 53774 / DSM 7210 / GS-15) protein is Small ribosomal subunit protein uS14.